Reading from the N-terminus, the 339-residue chain is Glucokinase (339 aa).

An ATP-binding site is contributed by 16–21; the sequence is GDIGGT.

The protein belongs to the bacterial glucokinase family.

Its subcellular location is the cytoplasm. The catalysed reaction is D-glucose + ATP = D-glucose 6-phosphate + ADP + H(+). The polypeptide is Glucokinase (Sinorhizobium medicae (strain WSM419) (Ensifer medicae)).